The chain runs to 251 residues: MSLKPFTYPFPETRFLHAGTNVYKFKIRYGNSIRGEEIEDKGVIIQELEDSIRAVLANMDSLQPFVTEHFIVFPYKSKWERVSHLKFKHGEIILTPYPFVFTLYIEMKCFAESLPSGKPTDDIPLELVLTAKEAEEATMRKRKLMEEPSTPSRPGPHRAKMETWSEASSTKKALKEHKRSWGEDSQQDTPASDSTAVTEQDPMLGHSLPGLVVPPLEHSNPPPLKEPAARGFLGFLSALFPFRYFFRKSTQ.

Over 1-227 (MSLKPFTYPF…HSNPPPLKEP (227 aa)) the chain is Nuclear. The segment at 140–225 (RKRKLMEEPS…LEHSNPPPLK (86 aa)) is disordered. Residues 183-198 (EDSQQDTPASDSTAVT) show a composition bias toward polar residues. The helical transmembrane segment at 228–246 (AARGFLGFLSALFPFRYFF) threads the bilayer. Residues 247-251 (RKSTQ) are Perinuclear space-facing.

This sequence belongs to the MAJIN family. Component of the MAJIN-TERB1-TERB2 complex, composed of MAJIN, TERB1 and TERB2.

Its subcellular location is the nucleus inner membrane. The protein localises to the chromosome. The protein resides in the telomere. Its function is as follows. Meiosis-specific telomere-associated protein involved in meiotic telomere attachment to the nucleus inner membrane, a crucial step for homologous pairing and synapsis. Component of the MAJIN-TERB1-TERB2 complex, which promotes telomere cap exchange by mediating attachment of telomeric DNA to the inner nuclear membrane and replacement of the protective cap of telomeric chromosomes: in early meiosis, the MAJIN-TERB1-TERB2 complex associates with telomeric DNA and the shelterin/telosome complex. During prophase, the complex matures and promotes release of the shelterin/telosome complex from telomeric DNA. In the complex, MAJIN acts as the anchoring subunit to the nucleus inner membrane. MAJIN shows DNA-binding activity, possibly for the stabilization of telomere attachment on the nucleus inner membrane. In Rattus norvegicus (Rat), this protein is Membrane-anchored junction protein.